The primary structure comprises 50 residues: MSNTFVAVEFSWLYAISLILPCETIRVAWAPKRAYHGTSEEKRRLAPADI.

This is an uncharacterized protein from Saccharomyces cerevisiae (strain ATCC 204508 / S288c) (Baker's yeast).